Consider the following 168-residue polypeptide: mRNA stability protein IGO1 (168 aa).

The span at 1–13 (MSNENLSPNSSNP) shows a compositional bias: low complexity. Positions 1–31 (MSNENLSPNSSNPDLTKLNNGESGTIDTSKF) are disordered. Positions 17–31 (KLNNGESGTIDTSKF) are enriched in polar residues. 2 positions are modified to phosphoserine: Ser32 and Ser64. The interval 125–168 (KEGSISSGPPSSNNGTIGGGSTSSTPVGNHSSSSSSLYTESPIR) is disordered. 2 stretches are compositionally biased toward low complexity: residues 127-139 (GSIS…SNNG) and 146-168 (TSST…SPIR).

It belongs to the endosulfine family. Interacts with RIM15, DHH1, PBP1, PBP4 and LSM12. In terms of processing, phosphorylated at Ser-64 by RIM15.

Required for TORC1 to properly control gene expression and chronological life span. Plays an essential role in initiation of the G0 program by preventing the degradation of specific nutrient-regulated mRNAs via the 5'-3' mRNA decay pathway. This Saccharomyces cerevisiae (strain ATCC 204508 / S288c) (Baker's yeast) protein is mRNA stability protein IGO1 (IGO1).